A 617-amino-acid chain; its full sequence is E3 ubiquitin-protein ligase ORTHRUS 1 (617 aa).

The PHD-type zinc finger occupies 12–62 (DGVCMRCQVNPPSEETLTCGTCVTPWHVPCLLPESLASSTGEWECPDCSGV). An RING-type 1 zinc finger spans residues 129–169 (CSICIQLPERPITTPCGHNFCLKCFEKWAVGQGKLTCMICR). Residues 258–407 (TRKQGVLVGE…FKVCRYLFVR (150 aa)) enclose the YDG domain. The segment at 495–552 (CQICREVLSLPVTTPCAHNFCKACLEAKFAGITQLRERSNGGRKLRAKKNIMTCPCCT) adopts an RING-type 2 zinc-finger fold. The stretch at 563–593 (QVNREMMEIIENFKKSEEEADASISEEEEEE) forms a coiled coil. A disordered region spans residues 575–617 (FKKSEEEADASISEEEEEESEPPTKKIKMDNNSVGGSGTSLSA). A compositionally biased stretch (acidic residues) spans 580–595 (EEADASISEEEEEESE). Positions 604 to 617 (DNNSVGGSGTSLSA) are enriched in polar residues.

As to expression, expressed in inflorescences and leaves.

It localises to the nucleus. The catalysed reaction is S-ubiquitinyl-[E2 ubiquitin-conjugating enzyme]-L-cysteine + [acceptor protein]-L-lysine = [E2 ubiquitin-conjugating enzyme]-L-cysteine + N(6)-ubiquitinyl-[acceptor protein]-L-lysine.. It functions in the pathway protein modification; protein ubiquitination. Its function is as follows. E3 ubiquitin-protein ligase. Participates in CpG methylation-dependent transcriptional regulation and epigenetic transcriptional silencing. Mediates ubiquitination with the E2 ubiquitin-conjugating enzymes UBC11, UBC8 and UBC8 homologs (e.g. UBC10, UBC11, UBC28 and UBC29) but not with UBC27, UBC30, UBC32, UBC34 and UBC36. Promotes methylation-mediated gene silencing leading, for example, to early flowering. Can bind to CpG, CpNpG, and CpNpN DNA motifs, with a strong preference for methylated forms, and with highest affinity for CpG substrate. This is E3 ubiquitin-protein ligase ORTHRUS 1 (ORTH1) from Arabidopsis thaliana (Mouse-ear cress).